A 263-amino-acid polypeptide reads, in one-letter code: Indole-3-glycerol phosphate synthase (263 aa).

It belongs to the TrpC family.

The enzyme catalyses 1-(2-carboxyphenylamino)-1-deoxy-D-ribulose 5-phosphate + H(+) = (1S,2R)-1-C-(indol-3-yl)glycerol 3-phosphate + CO2 + H2O. It functions in the pathway amino-acid biosynthesis; L-tryptophan biosynthesis; L-tryptophan from chorismate: step 4/5. In Rhodospirillum rubrum (strain ATCC 11170 / ATH 1.1.1 / DSM 467 / LMG 4362 / NCIMB 8255 / S1), this protein is Indole-3-glycerol phosphate synthase.